We begin with the raw amino-acid sequence, 203 residues long: Pyridoxal 5'-phosphate synthase subunit PdxT (203 aa).

Residue 52–54 participates in L-glutamine binding; sequence GES. Cysteine 84 (nucleophile) is an active-site residue. L-glutamine contacts are provided by residues arginine 116 and 144 to 145; that span reads IR. Catalysis depends on charge relay system residues histidine 184 and glutamate 186.

The protein belongs to the glutaminase PdxT/SNO family. As to quaternary structure, in the presence of PdxS, forms a dodecamer of heterodimers. Only shows activity in the heterodimer.

The enzyme catalyses aldehydo-D-ribose 5-phosphate + D-glyceraldehyde 3-phosphate + L-glutamine = pyridoxal 5'-phosphate + L-glutamate + phosphate + 3 H2O + H(+). The catalysed reaction is L-glutamine + H2O = L-glutamate + NH4(+). Its pathway is cofactor biosynthesis; pyridoxal 5'-phosphate biosynthesis. Catalyzes the hydrolysis of glutamine to glutamate and ammonia as part of the biosynthesis of pyridoxal 5'-phosphate. The resulting ammonia molecule is channeled to the active site of PdxS. This chain is Pyridoxal 5'-phosphate synthase subunit PdxT, found in Aeropyrum pernix (strain ATCC 700893 / DSM 11879 / JCM 9820 / NBRC 100138 / K1).